We begin with the raw amino-acid sequence, 193 residues long: Immunogenic protein MPB70 (193 aa).

Positions 1 to 30 are cleaved as a signal peptide; it reads MKVKNTIAATSFAAAGLAALAVAVSPPAAA. Residues 57-189 enclose the FAS1 domain; it reads QDPVAVAASN…ATVYMIDSVL (133 aa).

As to quaternary structure, generally found as a monomer; homodimer in culture fluids.

It localises to the secreted. The protein is Immunogenic protein MPB70 (mpb70) of Mycobacterium bovis (strain ATCC BAA-935 / AF2122/97).